Reading from the N-terminus, the 584-residue chain is ATP synthase subunit alpha, mitochondrial (584 aa).

The N-terminal 24 residues, 1 to 24 (MRRFGSKFASGLASRCALACPLAS), are a transit peptide targeting the mitochondrion. Residues 207 to 214 (DRQTGKTS) and glutamine 464 contribute to the ATP site.

This sequence belongs to the ATPase alpha/beta chains family. As to quaternary structure, F-type ATPases have 2 components, F(1) - the catalytic core - and F(o) - the membrane proton channel. F(1) has five subunits: alpha(3), beta(3), gamma(1), delta(1), epsilon(1), plus the additional subunit P18 (Tb427.05.1710) that is not present in F(1)F(o) ATP synthase from metazoa. Subunit P18 (Tb927.5.1710) interacts with the alpha subunit with a 1:1 stoichiometry; the interaction is direct. Subunit gamma is part of the central stalk. F(o) has three main subunits: a, b and c. The trypanosomal ATPase complex contains additional subunits that are not present in the F(1)F(o) ATP synthase from metazoa.

The protein localises to the mitochondrion. Its subcellular location is the mitochondrion inner membrane. Functionally, mitochondrial membrane ATP synthase (F(1)F(o) ATP synthase) produces ATP from ADP in the presence of a proton gradient across the membrane which is generated by electron transport complexes of the respiratory chain. F-type ATPases consist of two structural domains, F(1) - containing the extramembraneous catalytic core, and F(o) - containing the membrane proton channel, linked together by a central stalk and a peripheral stalk. During catalysis, ATP synthesis in the catalytic domain of F(1) is coupled via a rotary mechanism of the central stalk subunits to proton translocation. Subunits alpha and beta form the catalytic core in F(1). Rotation of the central stalk against the surrounding alpha(3)beta(3) subunits leads to hydrolysis of ATP in three separate catalytic sites on the beta subunits. Subunit alpha does not bear the catalytic high-affinity ATP-binding sites. Contrary to the procyclic, insect form that requires F(1)F(o) ATP synthase for ATP synthesis, the bloodstream form relies on ATP hydrolysis by F(1)F(o) ATP synthase to maintain its mitochondrial membrane potential. The sequence is that of ATP synthase subunit alpha, mitochondrial from Trypanosoma brucei brucei.